Reading from the N-terminus, the 448-residue chain is Exodeoxyribonuclease 7 large subunit (448 aa).

Belongs to the XseA family. Heterooligomer composed of large and small subunits.

Its subcellular location is the cytoplasm. It catalyses the reaction Exonucleolytic cleavage in either 5'- to 3'- or 3'- to 5'-direction to yield nucleoside 5'-phosphates.. Functionally, bidirectionally degrades single-stranded DNA into large acid-insoluble oligonucleotides, which are then degraded further into small acid-soluble oligonucleotides. The protein is Exodeoxyribonuclease 7 large subunit of Nitrosomonas eutropha (strain DSM 101675 / C91 / Nm57).